Consider the following 164-residue polypeptide: Translocator protein homolog (164 aa).

Helical transmembrane passes span 16 to 34, 52 to 72, 89 to 106, 112 to 132, and 141 to 163; these read WSAS…NSYK, SAFG…SHLA, ILYI…PLFY, KLAL…AKTW, and KWLI…YCLL.

Belongs to the TspO/BZRP family.

It is found in the mitochondrion membrane. Its function is as follows. May play a role in the transport of porphyrins and heme. In Schizosaccharomyces pombe (strain 972 / ATCC 24843) (Fission yeast), this protein is Translocator protein homolog.